The chain runs to 344 residues: Cyclin-G2 (344 aa).

The span at 301 to 313 shows a compositional bias: acidic residues; sequence ESESEDSCEDMSC. The interval 301–320 is disordered; it reads ESESEDSCEDMSCGEESLSS.

Belongs to the cyclin family. Cyclin G subfamily. As to expression, high levels in cerebellum, thymus, spleen and prostate. Low levels in skeletal muscle.

It localises to the cytoplasm. Its function is as follows. May play a role in growth regulation and in negative regulation of cell cycle progression. This chain is Cyclin-G2 (CCNG2), found in Homo sapiens (Human).